A 778-amino-acid chain; its full sequence is Receptor like protein 28 (778 aa).

Residues 1-24 (MSGSHLRLRFLSLLLLCCVSSSTS) form the signal peptide. Topologically, residues 25-739 (SLFTFSYPVL…EEQEQVLNWK (715 aa)) are extracellular. N-linked (GlcNAc...) asparagine glycans are attached at residues asparagine 60, asparagine 72, asparagine 93, asparagine 106, asparagine 111, asparagine 147, asparagine 170, and asparagine 173. 5 LRR repeats span residues 99-123 (FHQL…EFGN), 125-147 (NKVE…SFSN), 148-171 (LSQL…VQNL), 172-195 (TNLS…LLMM), and 197-219 (FLSY…TSSK). Residues 220–240 (LEILYLGLKPFEGQILEPISK) form an LRR 6; degenerate repeat. 6 LRR repeats span residues 241-265 (LINL…LFSS), 266-291 (LKSL…LYIP), 293-313 (TLEK…ILKT), 314-338 (LQKL…LWRL), 340-363 (RLRS…VLVN), and 364-387 (SSME…PLSI). Asparagine 253 carries N-linked (GlcNAc...) asparagine glycosylation. N-linked (GlcNAc...) asparagine glycans are attached at residues asparagine 348 and asparagine 363. Residues 388-407 (KAFSAGYNNFSGEIPLSICN) form an LRR 13; degenerate repeat. N-linked (GlcNAc...) asparagine glycans are attached at residues asparagine 396, asparagine 407, asparagine 420, asparagine 431, and asparagine 476. 10 LRR repeats span residues 408–429 (RSSL…PQCL), 430–453 (SNLT…LCAG), 455–477 (SLQT…LLNC), 479–500 (SLEF…WLKA), 501–525 (LPNL…HQSP), 528–552 (FPEL…YFVN), 601–625 (LNSY…IGLL), 626–649 (KELI…LANA), 650–673 (TELE…LKTL), and 678–700 (YINV…SSFE). Residues asparagine 632 and asparagine 648 are each glycosylated (N-linked (GlcNAc...) asparagine). Residue asparagine 680 is glycosylated (N-linked (GlcNAc...) asparagine). A helical transmembrane segment spans residues 740–760 (AVATGYGTGLLLGLAIAQVIA). At 761–778 (SYKPDWLVKIIGLFRFCF) the chain is on the cytoplasmic side.

It belongs to the RLP family.

Its subcellular location is the cell membrane. This chain is Receptor like protein 28, found in Arabidopsis thaliana (Mouse-ear cress).